The following is a 922-amino-acid chain: Lysine-specific demethylase 7A (922 aa).

The segment at 6–57 (PVYCVCRQPYDVSRFMIECDICKDWFHSSCVKVEEHQAADIDLYHCPNCEVL) adopts a PHD-type zinc-finger fold. The 157-residue stretch at 199–355 (FSDTKMADLV…MQLRCYEMEK (157 aa)) folds into the JmjC domain. Threonine 248 lines the substrate pocket. Fe cation-binding residues include histidine 251 and aspartate 253. Position 268 (lysine 268) interacts with substrate. Histidine 323 serves as a coordination point for Fe cation. 5 disordered regions span residues 445-490 (EEEG…TKTP), 565-607 (RSLY…TQKP), 622-711 (GSSE…EQEA), 754-773 (GKEHLDSHSHKAANSDHHVK), and 872-902 (LHPTKRPASNPPPISNQATKGKRPKKGMATA). Residues 473–483 (HHSGRKARRLR) show a composition bias toward basic residues. Over residues 648 to 666 (ESESSGDDDDEEEEEEEER) the composition is skewed to acidic residues. Composition is skewed to basic and acidic residues over residues 667 to 683 (QEPIRNLKEEHSGRRLP) and 691 to 701 (PDHDSPQKREC).

Belongs to the JHDM1 histone demethylase family. JHDM1D subfamily. The cofactor is Fe(2+).

The protein resides in the nucleus. In terms of biological role, histone demethylase required for brain development. Specifically demethylates dimethylated 'Lys-9' and 'Lys-27' (H3K9me2 and H3K27me2, respectively) of histone H3 and monomethylated histone H4 'Lys-20' residue (H4K20Me1), thereby playing a central role in histone code. The chain is Lysine-specific demethylase 7A (kdm7a) from Xenopus tropicalis (Western clawed frog).